The primary structure comprises 475 residues: Putative response regulator NtrX-like (475 aa).

Residues 5-121 (DVLIVDDEES…KLVILLKRAC (117 aa)) form the Response regulatory domain. Asp54 carries the 4-aspartylphosphate modification. The Sigma-54 factor interaction domain occupies 143–369 (LVGGCSVTLK…LRNVVEWTLI (227 aa)). Residues 171 to 178 (GKVGSGKE) and 232 to 241 (ANNGTLYIDE) each bind ATP.

Member of the two-component regulatory system RF_0895/RF_0427. The polypeptide is Putative response regulator NtrX-like (Rickettsia felis (strain ATCC VR-1525 / URRWXCal2) (Rickettsia azadi)).